Reading from the N-terminus, the 360-residue chain is NADP-dependent alcohol dehydrogenase 6 (360 aa).

Residue Cys-46 coordinates Zn(2+). Positions 47 and 51 each coordinate NADP(+). Residues His-68, Cys-100, Cys-103, Cys-106, and Cys-114 each contribute to the Zn(2+) site. A Phosphoserine modification is found at Ser-131. Cys-163 is a binding site for Zn(2+). NADP(+) contacts are provided by Leu-188, Gly-190, Ile-191, Ser-210, Arg-211, Lys-215, Cys-250, Ser-252, Thr-255, Asp-256, Ile-275, Ile-277, Tyr-298, Ser-299, Leu-301, and Arg-348. A Phosphoserine modification is found at Ser-359.

Belongs to the zinc-containing alcohol dehydrogenase family. Homodimer. Requires Zn(2+) as cofactor.

The protein localises to the cytoplasm. It is found in the nucleus. It catalyses the reaction a primary alcohol + NADP(+) = an aldehyde + NADPH + H(+). It carries out the reaction (E)-cinnamyl alcohol + NADP(+) = (E)-cinnamaldehyde + NADPH + H(+). The catalysed reaction is hexan-1-ol + NADP(+) = hexanal + NADPH + H(+). The enzyme catalyses 3-methylbutanol + NADP(+) = 3-methylbutanal + NADPH + H(+). It catalyses the reaction S-nitroso-CoA + NADPH + H(+) = sulfinamide-CoA + NADP(+). NADP-dependent, medium-chain alcohol dehydrogenase with a broad substrate specificity. Aldehydes exhibited 50-12000 times higher catalytic efficiency than the corresponding alcohols, therefore the major function of the enzyme is as an aldehyde reductase. The enzyme is active towards aromatic and aliphatic (linear and branched-chain) aldehydes. The enzyme is very active towards aromatic aldehydes, such as cinnamaldehyde, benzaldehyde and substituted benzaldehydes, such as veratraldehyde and panisaldehyde. It exhibits low activity towards substituted cinnamaldehydes, such as coniferaldehyde and sinapaldehyde. The enzyme has no activity with ketones, such as acetone or cyclohexanone. For the reverse reaction, linear and branched-chain primary alcohols are substrates, whereas very low activity is found with secondary alcohols, such as butan-2-ol. The enzyme may be physiologically involved in several steps of the lignin degradation pathway, initiated by other microorganisms, in the synthesis of fusel alcohols, products derived from the aminoacidic metabolism, and in the homeostasis of NADP(H). Has the ability to reduce 5-hydroxymethyl furfural (HMF), a furan derivative which is formed during the hydrolysis of lignocellulosic materials, to 5-hydroxymethylfurfuryl alcohol, thereby alleviating the inhibition of the fermentation of lignocellulose hydrolysates by HMF during fuel ethanol production. Also acts as an inhibitor of protein S-nitrosylation by mediating degradation of S-nitroso-coenzyme A (S-nitroso-CoA), a cofactor required to S-nitrosylate proteins. This is NADP-dependent alcohol dehydrogenase 6 from Saccharomyces cerevisiae (strain ATCC 204508 / S288c) (Baker's yeast).